A 105-amino-acid chain; its full sequence is Cell division protein FtsB (105 aa).

The Cytoplasmic segment spans residues 1–3; that stretch reads MRL. The chain crosses the membrane as a helical span at residues 4 to 21; sequence FTLILMVVLALVQRQLWF. Topologically, residues 22-105 are periplasmic; the sequence is GKNGLVEYRQ…NKQSSLPKSD (84 aa). The stretch at 28–74 forms a coiled coil; it reads EYRQVSENLLRRQADNQKLQERNMLLKEDIEDLKSGLEAIEELARND.

Belongs to the FtsB family. As to quaternary structure, part of a complex composed of FtsB, FtsL and FtsQ.

It is found in the cell inner membrane. Essential cell division protein. May link together the upstream cell division proteins, which are predominantly cytoplasmic, with the downstream cell division proteins, which are predominantly periplasmic. The chain is Cell division protein FtsB from Tolumonas auensis (strain DSM 9187 / NBRC 110442 / TA 4).